A 520-amino-acid polypeptide reads, in one-letter code: Sodium-dependent dicarboxylate transporter SdcS (520 aa).

Transmembrane regions (helical) follow at residues 30 to 50 (AGQL…LLFF), 55 to 75 (LPWK…WWIT), 77 to 97 (AIPI…GHIL), 104 to 124 (SEYG…AIAM), 160 to 180 (SMFV…LAII), 207 to 227 (IGYA…PLII), 242 to 262 (FAKW…ITWL), 298 to 318 (KVVQ…EFLL), 323 to 343 (VTSS…LFVI), 362 to 382 (ELPW…KGIS), 399 to 419 (GVSP…LTEV), 428 to 448 (MILP…LLLM), 452 to 472 (AMAA…AIIF), and 491 to 511 (LISA…VLGI).

It belongs to the SLC13A/DASS transporter (TC 2.A.47) family. NADC subfamily.

The protein resides in the cell membrane. In terms of biological role, mediates the transport of the dicarboxylates fumarate, malate, and succinate across the cytoplasmic membrane via a Na(+)-electrochemical gradient. This chain is Sodium-dependent dicarboxylate transporter SdcS (sdcS), found in Staphylococcus aureus (strain MSSA476).